The primary structure comprises 225 residues: Phosphoribosylformylglycinamidine synthase subunit PurQ (225 aa).

In terms of domain architecture, Glutamine amidotransferase type-1 spans 4–225 (RIGVITFPGT…LSVLDTLVTA (222 aa)). The active-site Nucleophile is the Cys87. Active-site residues include His196 and Glu198.

As to quaternary structure, part of the FGAM synthase complex composed of 1 PurL, 1 PurQ and 2 PurS subunits.

The protein resides in the cytoplasm. The catalysed reaction is N(2)-formyl-N(1)-(5-phospho-beta-D-ribosyl)glycinamide + L-glutamine + ATP + H2O = 2-formamido-N(1)-(5-O-phospho-beta-D-ribosyl)acetamidine + L-glutamate + ADP + phosphate + H(+). It carries out the reaction L-glutamine + H2O = L-glutamate + NH4(+). It participates in purine metabolism; IMP biosynthesis via de novo pathway; 5-amino-1-(5-phospho-D-ribosyl)imidazole from N(2)-formyl-N(1)-(5-phospho-D-ribosyl)glycinamide: step 1/2. Its function is as follows. Part of the phosphoribosylformylglycinamidine synthase complex involved in the purines biosynthetic pathway. Catalyzes the ATP-dependent conversion of formylglycinamide ribonucleotide (FGAR) and glutamine to yield formylglycinamidine ribonucleotide (FGAM) and glutamate. The FGAM synthase complex is composed of three subunits. PurQ produces an ammonia molecule by converting glutamine to glutamate. PurL transfers the ammonia molecule to FGAR to form FGAM in an ATP-dependent manner. PurS interacts with PurQ and PurL and is thought to assist in the transfer of the ammonia molecule from PurQ to PurL. The sequence is that of Phosphoribosylformylglycinamidine synthase subunit PurQ from Nocardia farcinica (strain IFM 10152).